The following is a 482-amino-acid chain: MAASCVALLVLALLLLVLLLGLWKRGRQTGRARHMVVVVLGDVGRSPRMQYHALSLAQSGFSVTLLGFYNSKPRDELLQNDRIRIVKLTDLRGLGAGPRILQYGVKVVFQAVYLLWKMMRMDPAAYIFLQNPPGLPAIAVCWFVGCICGSKLVIDWHNYGYSIMGLVHGPRHPIVLLAKWYEKFFGRLSHLNLCVTNAMREDLAENWCVRAVTLYDKPASFFKETPLDLQHELFMKLSHTYSPFQSCSDPSHPDTERSAFTERDCQSGVVRRLHGRPALLVSSTSWTEDEDFSILLRALEKFEQQALTGDSLPSLVCVITGKGPLREHYRHLISQKHLQHVRFCTPWLEAEDYPLLLGSADLGVCLHMSSSGLDLPMKVVDMFGCHLPVCAVNFKCLHELVRHGENGLVFKDAEELAAQLQMLFSKFPDPAGKLSQFRKKLQESGQQRWDESWQHTVLPLLAHSQMTPRPHPPCGHPSCRGF.

Topologically, residues 1 to 2 (MA) are lumenal. A helical transmembrane segment spans residues 3–23 (ASCVALLVLALLLLVLLLGLW). Residues 24-99 (KRGRQTGRAR…DLRGLGAGPR (76 aa)) are Cytoplasmic-facing. The helical intramembrane region spans 100 to 120 (ILQYGVKVVFQAVYLLWKMMR). Residues 121–482 (MDPAAYIFLQ…PCGHPSCRGF (362 aa)) lie on the Cytoplasmic side of the membrane. The residue at position 242 (Ser-242) is a Phosphoserine.

Belongs to the glycosyltransferase group 1 family. Glycosyltransferase 33 subfamily.

It is found in the endoplasmic reticulum membrane. It catalyses the reaction an N,N'-diacetylchitobiosyl-diphospho-di-trans,poly-cis-dolichol + GDP-alpha-D-mannose = a beta-D-Man-(1-&gt;4)-beta-D-GlcNAc-(1-&gt;4)-alpha-D-GlcNAc-diphospho-di-trans,poly-cis-dolichol + GDP + H(+). It participates in protein modification; protein glycosylation. In terms of biological role, mannosyltransferase that operates in the biosynthetic pathway of dolichol-linked oligosaccharides, the glycan precursors employed in protein asparagine (N)-glycosylation. The assembly of dolichol-linked oligosaccharides begins on the cytosolic side of the endoplasmic reticulum membrane and finishes in its lumen. The sequential addition of sugars to dolichol pyrophosphate produces dolichol-linked oligosaccharides containing fourteen sugars, including two GlcNAcs, nine mannoses and three glucoses. Once assembled, the oligosaccharide is transferred from the lipid to nascent proteins by oligosaccharyltransferases. Catalyzes, on the cytoplasmic face of the endoplasmic reticulum, the addition of the first mannose residues to the dolichol-linked oligosaccharide chain, to produce Man1GlcNAc(2)-PP-dolichol core oligosaccharide. Man1GlcNAc(2)-PP-dolichol is a substrate for ALG2, the following enzyme in the biosynthetic pathway. This is Chitobiosyldiphosphodolichol beta-mannosyltransferase from Mus musculus (Mouse).